The following is a 150-amino-acid chain: UPF0506 protein SJCHGC02381 (150 aa).

Residues 1 to 18 form the signal peptide; sequence MNTCIQLLILCLVTVINS. N-linked (GlcNAc...) asparagine glycosylation is found at Asn20, Asn24, Asn32, Asn36, Asn48, Asn52, Asn64, and Asn110. The tract at residues 22-49 is disordered; it reads TDNSTENTIKNETENATETELPETFENE. Residues 36–49 show a composition bias toward acidic residues; that stretch reads NATETELPETFENE. 3 cysteine pairs are disulfide-bonded: Cys116/Cys130, Cys123/Cys134, and Cys129/Cys139.

The protein belongs to the UPF0506 family.

It is found in the secreted. The chain is UPF0506 protein SJCHGC02381 from Schistosoma japonicum (Blood fluke).